Reading from the N-terminus, the 201-residue chain is Dephospho-CoA kinase (201 aa).

The 198-residue stretch at 4-201 folds into the DPCK domain; sequence IIGITGGIAS…LEGGRQDDRD (198 aa). 12–17 is an ATP binding site; that stretch reads ASGKST.

The protein belongs to the CoaE family.

It is found in the cytoplasm. The catalysed reaction is 3'-dephospho-CoA + ATP = ADP + CoA + H(+). It functions in the pathway cofactor biosynthesis; coenzyme A biosynthesis; CoA from (R)-pantothenate: step 5/5. Catalyzes the phosphorylation of the 3'-hydroxyl group of dephosphocoenzyme A to form coenzyme A. The protein is Dephospho-CoA kinase of Streptococcus pneumoniae (strain ATCC BAA-255 / R6).